Consider the following 76-residue polypeptide: Short coiled-coil protein B (76 aa).

A coiled-coil region spans residues 6-52; sequence ENQVELEEKTRLINQVLELQNTLEDLSARVDAVKEENLKLKSENQVL.

The protein belongs to the SCOC family.

It localises to the golgi apparatus membrane. Its subcellular location is the golgi apparatus. It is found in the trans-Golgi network. The protein localises to the cytoplasm. The protein resides in the cytosol. Its function is as follows. Positive regulator of amino acid starvation-induced autophagy. This chain is Short coiled-coil protein B (scocb), found in Danio rerio (Zebrafish).